A 789-amino-acid polypeptide reads, in one-letter code: Phenylalanine--tRNA ligase beta subunit (789 aa).

The tRNA-binding domain maps to 38 to 151 (KKHLQSFVVV…NTYNVGESFF (114 aa)). A B5 domain is found at 398-474 (HNDILLNFSP…RLYGYDKILE (77 aa)). Residues aspartate 452, aspartate 458, glutamate 461, and glutamate 462 each contribute to the Mg(2+) site. Residues 694-787 (LRYQSVKRDF…ISKGFNGILR (94 aa)) form the FDX-ACB domain.

This sequence belongs to the phenylalanyl-tRNA synthetase beta subunit family. Type 1 subfamily. Tetramer of two alpha and two beta subunits. The cofactor is Mg(2+).

It is found in the cytoplasm. The catalysed reaction is tRNA(Phe) + L-phenylalanine + ATP = L-phenylalanyl-tRNA(Phe) + AMP + diphosphate + H(+). The protein is Phenylalanine--tRNA ligase beta subunit of Ehrlichia ruminantium (strain Gardel).